A 421-amino-acid chain; its full sequence is Imidazolonepropionase (421 aa).

Fe(3+)-binding residues include His-81 and His-83. Positions 81 and 83 each coordinate Zn(2+). Arg-90, Tyr-153, and His-186 together coordinate 4-imidazolone-5-propanoate. Tyr-153 contributes to the N-formimidoyl-L-glutamate binding site. His-251 serves as a coordination point for Fe(3+). His-251 is a Zn(2+) binding site. 4-imidazolone-5-propanoate is bound at residue Glu-254. Residue Asp-326 coordinates Fe(3+). Asp-326 is a Zn(2+) binding site. N-formimidoyl-L-glutamate-binding residues include Asn-328 and Gly-330. 4-imidazolone-5-propanoate is bound at residue Ser-331.

It belongs to the metallo-dependent hydrolases superfamily. HutI family. The cofactor is Zn(2+). Fe(3+) is required as a cofactor.

The protein resides in the cytoplasm. The catalysed reaction is 4-imidazolone-5-propanoate + H2O = N-formimidoyl-L-glutamate. It participates in amino-acid degradation; L-histidine degradation into L-glutamate; N-formimidoyl-L-glutamate from L-histidine: step 3/3. Functionally, catalyzes the hydrolytic cleavage of the carbon-nitrogen bond in imidazolone-5-propanoate to yield N-formimidoyl-L-glutamate. It is the third step in the universal histidine degradation pathway. This Streptococcus pyogenes serotype M28 (strain MGAS6180) protein is Imidazolonepropionase.